Reading from the N-terminus, the 494-residue chain is Glutamate--tRNA ligase (494 aa).

Positions 10 to 20 (PSPTGDPHVGT) match the 'HIGH' region motif. Cys-107, Cys-109, Cys-134, and His-136 together coordinate Zn(2+). The 'KMSKS' region motif lies at 251-255 (KLSKR). Lys-254 provides a ligand contact to ATP.

It belongs to the class-I aminoacyl-tRNA synthetase family. Glutamate--tRNA ligase type 1 subfamily. As to quaternary structure, monomer. The cofactor is Zn(2+).

The protein resides in the cytoplasm. It catalyses the reaction tRNA(Glu) + L-glutamate + ATP = L-glutamyl-tRNA(Glu) + AMP + diphosphate. Functionally, catalyzes the attachment of glutamate to tRNA(Glu) in a two-step reaction: glutamate is first activated by ATP to form Glu-AMP and then transferred to the acceptor end of tRNA(Glu). The sequence is that of Glutamate--tRNA ligase from Pseudomonas aeruginosa (strain ATCC 15692 / DSM 22644 / CIP 104116 / JCM 14847 / LMG 12228 / 1C / PRS 101 / PAO1).